We begin with the raw amino-acid sequence, 880 residues long: Valine--tRNA ligase (880 aa).

The 'HIGH' region signature appears at 46–56 (PNVTGKLHLGH). The 'KMSKS' region signature appears at 520–524 (KMSKS). Residue Lys523 participates in ATP binding. Positions 808–880 (LAGLINIEEE…KARIAELKEN (73 aa)) form a coiled coil.

Belongs to the class-I aminoacyl-tRNA synthetase family. ValS type 1 subfamily. In terms of assembly, monomer.

The protein resides in the cytoplasm. It carries out the reaction tRNA(Val) + L-valine + ATP = L-valyl-tRNA(Val) + AMP + diphosphate. Its function is as follows. Catalyzes the attachment of valine to tRNA(Val). As ValRS can inadvertently accommodate and process structurally similar amino acids such as threonine, to avoid such errors, it has a 'posttransfer' editing activity that hydrolyzes mischarged Thr-tRNA(Val) in a tRNA-dependent manner. This chain is Valine--tRNA ligase, found in Lactococcus lactis subsp. lactis (strain IL1403) (Streptococcus lactis).